Here is a 124-residue protein sequence, read N- to C-terminus: Fluoride-specific ion channel FluC (124 aa).

The next 4 membrane-spanning stretches (helical) occupy residues 5–25 (VYIA…SGLV), 32–52 (SFPY…GLVM), 67–87 (FAIT…SFET), and 96–116 (LLIA…CTWI). 2 residues coordinate Na(+): Gly-75 and Thr-78.

The protein belongs to the fluoride channel Fluc/FEX (TC 1.A.43) family.

The protein localises to the cell inner membrane. It catalyses the reaction fluoride(in) = fluoride(out). Na(+) is not transported, but it plays an essential structural role and its presence is essential for fluoride channel function. Fluoride-specific ion channel. Important for reducing fluoride concentration in the cell, thus reducing its toxicity. The protein is Fluoride-specific ion channel FluC of Geobacter sp. (strain M21).